We begin with the raw amino-acid sequence, 450 residues long: Ceramide glucosyltransferase (450 aa).

The Lumenal segment spans residues 1 to 8 (MSDSGTLS). The helical transmembrane segment at 9–29 (LIGGIVFLVLWVVVWSICLLG) threads the bilayer. The Cytoplasmic portion of the chain corresponds to 30–337 (WRTARIRYAH…IRVRKKMTLA (308 aa)). Residue Asp96 is a short sequence motif, D1. Position 148 (Asp148) is a short sequence motif, D2. A short sequence motif (D3) is located at residue Asp286. Asp286 functions as the Proton acceptor in the catalytic mechanism. Residues 323–327 (RRVRW) carry the (Q/R)XXRW motif. Residues 338-358 (ATLLEPLTESIISGLYGAWAI) traverse the membrane as a helical segment. Topologically, residues 359–361 (SRL) are lumenal. The chain crosses the membrane as a helical span at residues 362–382 (LGGNILPLFLLHMAAWISVDI). The Cytoplasmic portion of the chain corresponds to 383-401 (STKRALETNIKGIGPPESK). The helical transmembrane segment at 402–422 (VTFLMAWAARECLALPIWMLA) threads the bilayer. Topologically, residues 423–450 (MTSSEVVWRGQKYKIIASGEAIRLGDRN) are lumenal.

Belongs to the glycosyltransferase 2 family.

The protein resides in the golgi apparatus membrane. It catalyses the reaction an N-acylsphing-4-enine + UDP-alpha-D-glucose = a beta-D-glucosyl-(1&lt;-&gt;1')-N-acylsphing-4-enine + UDP + H(+). The protein operates within lipid metabolism; sphingolipid metabolism. In terms of biological role, catalyzes the final step in the biosynthesis of the membrane lipid glucosylceramide (GluCer), the transfer of glucose to ceramide. Glucosylceramides play important roles in growth, differentiation and pathogenicity. Essential factor in determining the success of fungal infection by regulating survival of yeast cells during the initial colonization of the host lung. The protein is Ceramide glucosyltransferase of Cryptococcus neoformans var. grubii serotype A (strain H99 / ATCC 208821 / CBS 10515 / FGSC 9487) (Filobasidiella neoformans var. grubii).